Here is an 89-residue protein sequence, read N- to C-terminus: Small ribosomal subunit protein uS15 (89 aa).

Belongs to the universal ribosomal protein uS15 family. As to quaternary structure, part of the 30S ribosomal subunit. Forms a bridge to the 50S subunit in the 70S ribosome, contacting the 23S rRNA.

One of the primary rRNA binding proteins, it binds directly to 16S rRNA where it helps nucleate assembly of the platform of the 30S subunit by binding and bridging several RNA helices of the 16S rRNA. Its function is as follows. Forms an intersubunit bridge (bridge B4) with the 23S rRNA of the 50S subunit in the ribosome. The chain is Small ribosomal subunit protein uS15 from Bacillus licheniformis (strain ATCC 14580 / DSM 13 / JCM 2505 / CCUG 7422 / NBRC 12200 / NCIMB 9375 / NCTC 10341 / NRRL NRS-1264 / Gibson 46).